Here is a 143-residue protein sequence, read N- to C-terminus: Transcriptional regulator MraZ (143 aa).

SpoVT-AbrB domains lie at 5 to 47 and 76 to 119; these read TYTP…PKEE and ADEQ…DAQA.

The protein belongs to the MraZ family. As to quaternary structure, forms oligomers.

It localises to the cytoplasm. Its subcellular location is the nucleoid. This is Transcriptional regulator MraZ from Corynebacterium glutamicum (strain R).